Here is a 467-residue protein sequence, read N- to C-terminus: Glutamate--tRNA ligase (467 aa).

The 'HIGH' region motif lies at 9–19 (PSPTGYLHIGG). A 'KMSKS' region motif is present at residues 237-241 (KLSKR). K240 contacts ATP.

Belongs to the class-I aminoacyl-tRNA synthetase family. Glutamate--tRNA ligase type 1 subfamily. Monomer.

Its subcellular location is the cytoplasm. The catalysed reaction is tRNA(Glu) + L-glutamate + ATP = L-glutamyl-tRNA(Glu) + AMP + diphosphate. Catalyzes the attachment of glutamate to tRNA(Glu) in a two-step reaction: glutamate is first activated by ATP to form Glu-AMP and then transferred to the acceptor end of tRNA(Glu). The polypeptide is Glutamate--tRNA ligase (Xylella fastidiosa (strain M23)).